The primary structure comprises 483 residues: Alginate biosynthesis protein AlgA (483 aa).

Belongs to the mannose-6-phosphate isomerase type 2 family. In terms of assembly, monomer. Co(2+) serves as cofactor.

It carries out the reaction D-mannose 6-phosphate = D-fructose 6-phosphate. It catalyses the reaction alpha-D-mannose 1-phosphate + GTP + H(+) = GDP-alpha-D-mannose + diphosphate. It functions in the pathway nucleotide-sugar biosynthesis; GDP-alpha-D-mannose biosynthesis; GDP-alpha-D-mannose from alpha-D-mannose 1-phosphate (GTP route): step 1/1. It participates in nucleotide-sugar biosynthesis; GDP-alpha-D-mannose biosynthesis; alpha-D-mannose 1-phosphate from D-fructose 6-phosphate: step 1/2. Its function is as follows. Produces a precursor for alginate polymerization. The alginate layer provides a protective barrier against host immune defenses and antibiotics. This is Alginate biosynthesis protein AlgA (algA) from Pseudomonas syringae pv. tomato (strain ATCC BAA-871 / DC3000).